We begin with the raw amino-acid sequence, 309 residues long: Probable manganese-dependent inorganic pyrophosphatase (309 aa).

Positions 9, 13, 15, 75, 97, and 149 each coordinate Mn(2+).

This sequence belongs to the PPase class C family. Mn(2+) is required as a cofactor.

The protein localises to the cytoplasm. The enzyme catalyses diphosphate + H2O = 2 phosphate + H(+). The chain is Probable manganese-dependent inorganic pyrophosphatase from Staphylococcus haemolyticus (strain JCSC1435).